Here is a 515-residue protein sequence, read N- to C-terminus: 1-pyrroline-5-carboxylate dehydrogenase (515 aa).

Residues E286 and C320 contribute to the active site.

Belongs to the aldehyde dehydrogenase family. RocA subfamily.

It catalyses the reaction L-glutamate 5-semialdehyde + NAD(+) + H2O = L-glutamate + NADH + 2 H(+). The protein operates within amino-acid degradation; L-proline degradation into L-glutamate; L-glutamate from L-proline: step 2/2. The polypeptide is 1-pyrroline-5-carboxylate dehydrogenase (Bacillus cytotoxicus (strain DSM 22905 / CIP 110041 / 391-98 / NVH 391-98)).